A 581-amino-acid polypeptide reads, in one-letter code: Phosphoinositide phospholipase C 2 (581 aa).

The EF-hand-like domain maps to 26–102 (EIKTIFEKYS…NPPLALHKVH (77 aa)). The region spanning 103–248 (HDMDAPISHY…LKRRIIISTK (146 aa)) is the PI-PLC X-box domain. Active-site residues include His-118 and His-164. The interval 279–314 (PSFIQRNKSEAKDDLDGNDDDDDDDDEDKSKINAPP) is disordered. The segment covering 294 to 305 (DGNDDDDDDDDE) has biased composition (acidic residues). One can recognise a PI-PLC Y-box domain in the interval 317–433 (KHLIAIHAGK…GYIKKPDLLL (117 aa)). A C2 domain is found at 434–563 (KSGSDSDIFD…EGIRAFPLHS (130 aa)).

Requires Ca(2+) as cofactor. Phosphorylation level varies significantly during early response to bacterial elicitor. As to expression, expressed in roots, shoots, leaves and flowers.

The protein resides in the cell membrane. The enzyme catalyses a 1,2-diacyl-sn-glycero-3-phospho-(1D-myo-inositol-4,5-bisphosphate) + H2O = 1D-myo-inositol 1,4,5-trisphosphate + a 1,2-diacyl-sn-glycerol + H(+). Functionally, the production of the second messenger molecules diacylglycerol (DAG) and inositol 1,4,5-trisphosphate (IP3) is mediated by activated phosphatidylinositol-specific phospholipase C enzymes. At physiological calcium concentration, the preferred substrate is phosphatidylinositol 4,5-bisphosphate versus phosphatidylinositol. This is Phosphoinositide phospholipase C 2 (PLC2) from Arabidopsis thaliana (Mouse-ear cress).